Consider the following 299-residue polypeptide: uncharacterized protein (299 aa).

An HTH lysR-type domain is found at Met1–Thr59. The segment at residues Phe19–Gln38 is a DNA-binding region (H-T-H motif).

Belongs to the LysR transcriptional regulatory family.

This is an uncharacterized protein from Escherichia coli (strain K12).